Reading from the N-terminus, the 503-residue chain is ATP synthase subunit alpha (503 aa).

ATP is bound at residue 170–177; sequence GDRKTGKT.

The protein belongs to the ATPase alpha/beta chains family. F-type ATPases have 2 components, CF(1) - the catalytic core - and CF(0) - the membrane proton channel. CF(1) has five subunits: alpha(3), beta(3), gamma(1), delta(1), epsilon(1). CF(0) has four main subunits: a, b, b' and c.

Its subcellular location is the cellular thylakoid membrane. It catalyses the reaction ATP + H2O + 4 H(+)(in) = ADP + phosphate + 5 H(+)(out). Its function is as follows. Produces ATP from ADP in the presence of a proton gradient across the membrane. The alpha chain is a regulatory subunit. This Gloeothece citriformis (strain PCC 7424) (Cyanothece sp. (strain PCC 7424)) protein is ATP synthase subunit alpha.